Consider the following 531-residue polypeptide: Membrane protein insertase YidC (531 aa).

4 helical membrane-spanning segments follow: residues 5–25 (ALIA…LFSP), 343–363 (GNYG…FYPL), 415–435 (LPML…MFSI), and 489–509 (PVVF…YWLV).

It belongs to the OXA1/ALB3/YidC family. Type 1 subfamily. Interacts with the Sec translocase complex via SecD. Specifically interacts with transmembrane segments of nascent integral membrane proteins during membrane integration.

The protein localises to the cell inner membrane. In terms of biological role, required for the insertion and/or proper folding and/or complex formation of integral membrane proteins into the membrane. Involved in integration of membrane proteins that insert both dependently and independently of the Sec translocase complex, as well as at least some lipoproteins. Aids folding of multispanning membrane proteins. The polypeptide is Membrane protein insertase YidC (Geobacter sulfurreducens (strain ATCC 51573 / DSM 12127 / PCA)).